We begin with the raw amino-acid sequence, 89 residues long: Small ribosomal subunit protein bS20 (89 aa).

Disordered stretches follow at residues 1-25 (MANI…ASMK) and 69-89 (KNAA…IQAS). The segment covering 7–20 (AIKRAKTSEKRRAH) has biased composition (basic residues).

It belongs to the bacterial ribosomal protein bS20 family.

In terms of biological role, binds directly to 16S ribosomal RNA. This is Small ribosomal subunit protein bS20 from Geobacillus kaustophilus (strain HTA426).